The chain runs to 469 residues: Ectonucleoside triphosphate diphosphohydrolase 5 (469 aa).

The N-terminal stretch at 1-24 (MATPWGAVFFLLMIACAGSTVFYR) is a signal peptide. Glu172 functions as the Proton acceptor in the catalytic mechanism. Asn232 carries an N-linked (GlcNAc...) asparagine glycan. Intrachain disulfides connect Cys272/Cys303 and Cys363/Cys377.

This sequence belongs to the GDA1/CD39 NTPase family. As to quaternary structure, monomer; active form. Homodimer; disulfide-linked. Homodimers are enzymatically inactive. The cofactor is Ca(2+). Mg(2+) serves as cofactor. Post-translationally, N-glycosylated; high-mannose type. Expressed in fetal cells and most adult tissues.

The protein localises to the endoplasmic reticulum. It localises to the secreted. The catalysed reaction is a ribonucleoside 5'-diphosphate + H2O = a ribonucleoside 5'-phosphate + phosphate + H(+). It carries out the reaction GDP + H2O = GMP + phosphate + H(+). It catalyses the reaction UDP + H2O = UMP + phosphate + H(+). The enzyme catalyses IDP + H2O = IMP + phosphate + H(+). The catalysed reaction is CDP + H2O = CMP + phosphate + H(+). It carries out the reaction ADP + H2O = AMP + phosphate + H(+). Its pathway is protein modification; protein glycosylation. Hydrolyzes nucleoside diphosphates with a preference for GDP, IDP and UDP compared to ADP and CDP. In the lumen of the endoplasmic reticulum, hydrolyzes UDP that acts as an end-product feedback inhibitor of the UDP-Glc:glycoprotein glucosyltransferases. UMP can be transported back by an UDP-sugar antiporter to the cytosol where it is consumed to regenerate UDP-glucose. Therefore, it positively regulates protein reglucosylation by clearing UDP from the ER lumen and by promoting the regeneration of UDP-glucose. Protein reglucosylation is essential to proper glycoprotein folding and quality control in the ER. The polypeptide is Ectonucleoside triphosphate diphosphohydrolase 5 (ENTPD5) (Mesocricetus auratus (Golden hamster)).